A 370-amino-acid chain; its full sequence is Thiamine-repressible mitochondrial transport protein THI74 (370 aa).

Residues 1–10 (MNRVGIDVDH) are Cytoplasmic-facing. A helical transmembrane segment spans residues 11–31 (MIGVLLLAVVVVFWVGASCLT). The Mitochondrial intermembrane portion of the chain corresponds to 32-42 (NELLETNAYNK). Residues 43 to 63 (PFFLTYLNISSFALYLTPDLW) form a helical membrane-spanning segment. At 64–119 (RIIQSRRKSLQERTERTLPIHTQESFSEFLPLLSSTPSTSSNLSSIADTKVKDTMR) the chain is on the cytoplasmic side. A helical transmembrane segment spans residues 120–140 (LSLLFCVLWFVANLAANAALS). The region spanning 129-190 (FVANLAANAA…SLFGIILIVM (62 aa)) is the EamA domain. At 141-146 (YTTVAS) the chain is on the mitochondrial intermembrane side. The helical transmembrane segment at 147–167 (STILSSTSSFFTLFLATSLGI) threads the bilayer. Residues 168–169 (ET) are Cytoplasmic-facing. A helical transmembrane segment spans residues 170 to 190 (FSTKKLLGLFVSLFGIILIVM). At 191–203 (QSSKQQDSVSASS) the chain is on the mitochondrial intermembrane side. A helical membrane pass occupies residues 204 to 224 (FLVGNTLALLGSLGYSVYTTL). Over 225 to 239 (LKYEISSKGLRLDIQ) the chain is Cytoplasmic. The helical transmembrane segment at 240–260 (MFLGYVGIFTFLLFWPILIIL) threads the bilayer. The Mitochondrial intermembrane portion of the chain corresponds to 261-273 (DITHMETFELPSN). Residues 274 to 294 (FHISFLVMLNCIIIFVSDYFW) form a helical membrane-spanning segment. The Cytoplasmic segment spans residues 295–303 (CKALILTSP). Residues 304–324 (LVVTVALTFTIPLAMFADFVW) traverse the membrane as a helical segment. Topologically, residues 325 to 326 (RE) are mitochondrial intermembrane. A helical transmembrane segment spans residues 327-347 (AFFTPWYIIGVIFIFVSFFLV). Residues 348–370 (NHRGESAVEKDCAAVEKGPILDA) lie on the Cytoplasmic side of the membrane.

The protein resides in the mitochondrion membrane. Functionally, may be involved in thiaminediphosphate transport across the mitochondrial membrane. The protein is Thiamine-repressible mitochondrial transport protein THI74 (THI74) of Saccharomyces cerevisiae (strain ATCC 204508 / S288c) (Baker's yeast).